Here is a 397-residue protein sequence, read N- to C-terminus: MKRIYVVGTADTKGEELAFLADAIAATGAAVSRVDVGTRDATIPVDISANDIAGHHPGGRDAVLGGNDRGAAVAAMGVAFARFAQSRNDIAAMIGIGGGGGTSIVTSGMRALPLGLPKIMVSTLASGDTAPYVDVSDIIMMPSVTDMAGLNRLSRVVLHNAAQAIAGMAARPAPPPDGKPSIGLTMFGVTTPCVTTIADALRSTYDCMVFHATGTGGRSMEKLADSGLLSGVIDITTTEVCDLLLGGVLPATEDRFGAIARTGLPYVGSVGALDMVNFWAPSTVPERYRGRLFYEHNPNVTLMRTSADECRAIGEWIGTRLALCDGPVHFLIPEKGVSALDIEGGTFFDREADAVLFEAIERTIKPNANRRVTRLPLHINDPEFAKAVAAFLDIARH.

This sequence belongs to the UPF0261 family.

The chain is UPF0261 protein mlr3387 from Mesorhizobium japonicum (strain LMG 29417 / CECT 9101 / MAFF 303099) (Mesorhizobium loti (strain MAFF 303099)).